The chain runs to 763 residues: Protein translocase subunit SecA 2 (763 aa).

Residues Gln83, 101 to 105 (GEGKT), and Asp490 each bind ATP.

This sequence belongs to the SecA family. Monomer and homodimer. Part of the essential Sec protein translocation apparatus which comprises SecA, SecYEG and auxiliary proteins SecDF. Other proteins may also be involved.

The protein localises to the cell membrane. Its subcellular location is the cytoplasm. It catalyses the reaction ATP + H2O + cellular proteinSide 1 = ADP + phosphate + cellular proteinSide 2.. Its function is as follows. Part of the Sec protein translocase complex. Interacts with the SecYEG preprotein conducting channel. Has a central role in coupling the hydrolysis of ATP to the transfer of proteins into and across the cell membrane, serving as an ATP-driven molecular motor driving the stepwise translocation of polypeptide chains across the membrane. This Corynebacterium glutamicum (strain R) protein is Protein translocase subunit SecA 2.